The primary structure comprises 359 residues: Aromatic amino acid aminotransferase (359 aa).

Residue lysine 223 is modified to N6-(pyridoxal phosphate)lysine.

It belongs to the class-II pyridoxal-phosphate-dependent aminotransferase family. In terms of assembly, homodimer. The cofactor is pyridoxal 5'-phosphate.

The enzyme catalyses an aromatic L-alpha-amino acid + 2-oxoglutarate = an aromatic oxo-acid + L-glutamate. Functionally, aminotransferase that catalyzes the conversion of aromatic amino acids and 2-oxoglutarate into corresponding aromatic oxo acids and L-glutamate. This is Aromatic amino acid aminotransferase from Streptomyces avermitilis (strain ATCC 31267 / DSM 46492 / JCM 5070 / NBRC 14893 / NCIMB 12804 / NRRL 8165 / MA-4680).